Consider the following 247-residue polypeptide: Epidermal cell differentiation inhibitor (247 aa).

The signal sequence occupies residues 1–35 (MKNKLLFKIFLSLSLALSVYSINDKIIEVSNTSLA). Positions 39-247 (KNFTDLDEAT…IIITAIVFKK (209 aa)) constitute a TR mART core domain. Catalysis depends on residues R120, S173, and E215.

The protein to ADP-ribosyltransferase C3 of Clostridium.

Its function is as follows. Inhibits terminal differentiation of cultured mouse keratinocytes. In culture, also inhibits the differentiation of human keratinocytes. Probable ADP-ribosyltransferase. In Staphylococcus aureus, this protein is Epidermal cell differentiation inhibitor.